The following is a 508-amino-acid chain: MTAKPALMVLGTSSGAGKSLMTAALCRVLRRRGETPLPFKGQNMSNNAWVDQAGGEMAYSQALQAWAAGLEPECAMNPVLLKPQGDSTSELIHLGHSVGSARAEHYYRDWFKPGWKAIRQGLEALQSSHPGGRLVLEGAGSPVEVNLQKRDLTNLRLAQYLRAHCVLVADIERGGVFAQIVGTLNLLRPVERPLIKGLLINRFRGRRELFDEGQRWLEANTGVPVLGVMPWLDELFPPEDSLDLLERRGRKRSAELNIAVLKLPSLSNFSDLDPLEAEPTVQLRWVAPGEELGLPDAVVIPGSKQTLRDLAAILNSGLGAALQAYNTGGGHVFGICGGMQMLGDELCDPEGLEGGAPSGNTSQAGLGLLPLRTVFSADKALRQRSSAALWPGGSHALEIEGFELHHGLTTINNASETCKPLCRDEELGWVKPFSDHGGLVAGTYLHGVFESGPWRRRWLNQLRERKGLAPLSEQQPHHSRQRDALLDRLADAFEQHINLEPLLNSSNG.

A GATase cobBQ-type domain is found at 255 to 454 (ELNIAVLKLP…LHGVFESGPW (200 aa)). C336 functions as the Nucleophile in the catalytic mechanism. H446 is a catalytic residue.

The protein belongs to the CobB/CobQ family. CobQ subfamily.

It participates in cofactor biosynthesis; adenosylcobalamin biosynthesis. In terms of biological role, catalyzes amidations at positions B, D, E, and G on adenosylcobyrinic A,C-diamide. NH(2) groups are provided by glutamine, and one molecule of ATP is hydrogenolyzed for each amidation. The protein is Cobyric acid synthase of Synechococcus sp. (strain CC9311).